The primary structure comprises 160 residues: Cytochrome b6-f complex subunit 4 (160 aa).

The next 3 membrane-spanning stretches (helical) occupy residues 36–56 (LLYI…GLAV), 95–115 (LLGV…PFLE), and 131–151 (TVFL…TLPI).

It belongs to the cytochrome b family. PetD subfamily. The 4 large subunits of the cytochrome b6-f complex are cytochrome b6, subunit IV (17 kDa polypeptide, petD), cytochrome f and the Rieske protein, while the 4 small subunits are petG, petL, petM and petN. The complex functions as a dimer.

It localises to the plastid. The protein resides in the chloroplast thylakoid membrane. Component of the cytochrome b6-f complex, which mediates electron transfer between photosystem II (PSII) and photosystem I (PSI), cyclic electron flow around PSI, and state transitions. This is Cytochrome b6-f complex subunit 4 from Lotus japonicus (Lotus corniculatus var. japonicus).